The sequence spans 360 residues: Peptide chain release factor 1 (360 aa).

An N5-methylglutamine modification is found at Q235. A disordered region spans residues 284-312; the sequence is ERQAQAQADTRRNLLGSGDRSDKIRTYNY.

This sequence belongs to the prokaryotic/mitochondrial release factor family. In terms of processing, methylated by PrmC. Methylation increases the termination efficiency of RF1.

It localises to the cytoplasm. In terms of biological role, peptide chain release factor 1 directs the termination of translation in response to the peptide chain termination codons UAG and UAA. The protein is Peptide chain release factor 1 of Histophilus somni (strain 129Pt) (Haemophilus somnus).